The following is a 565-amino-acid chain: Receptor-like serine/threonine-protein kinase NCRK (565 aa).

The signal sequence occupies residues 1–23 (MKMRVETALAILLVLISIQQCYG). The Extracellular segment spans residues 24–103 (GVSNYTCTCF…SKKQYLSRKL (80 aa)). Asparagine 27, asparagine 37, asparagine 45, asparagine 77, and asparagine 85 each carry an N-linked (GlcNAc...) asparagine glycan. The helical transmembrane segment at 104–124 (VIVILLFCGVLISLAFLASMI) threads the bilayer. Residues 125–565 (CYICRKDKFS…PVLLEPSAHI (441 aa)) are Cytoplasmic-facing. In terms of domain architecture, Protein kinase spans 210-495 (FSSNSVIGHG…REVVQILSTI (286 aa)). Residues 216-224 (IGHGGSSCV) and lysine 238 contribute to the ATP site. The active-site Proton acceptor is aspartate 339. 2 positions are modified to phosphothreonine: threonine 378 and threonine 383. A Phosphotyrosine modification is found at tyrosine 391.

Belongs to the protein kinase superfamily. Ser/Thr protein kinase family. As to quaternary structure, interacts with ARAC5. Post-translationally, phosphorylated. Mostly expressed in leaf primordia, root and shoot apical meristems, lateral root primordia, and stele of older roots and hypocotyls. In leaves and cotyledons, highest levels observed in trichomes, vasculatures, and hydathode endothem.

It is found in the cell membrane. The protein localises to the prevacuolar compartment membrane. It localises to the endosome. It carries out the reaction L-seryl-[protein] + ATP = O-phospho-L-seryl-[protein] + ADP + H(+). It catalyses the reaction L-threonyl-[protein] + ATP = O-phospho-L-threonyl-[protein] + ADP + H(+). The polypeptide is Receptor-like serine/threonine-protein kinase NCRK (NCRK) (Arabidopsis thaliana (Mouse-ear cress)).